Consider the following 312-residue polypeptide: Porphobilinogen deaminase (312 aa).

At Cys241 the chain carries S-(dipyrrolylmethanemethyl)cysteine.

This sequence belongs to the HMBS family. As to quaternary structure, monomer. It depends on dipyrromethane as a cofactor.

It carries out the reaction 4 porphobilinogen + H2O = hydroxymethylbilane + 4 NH4(+). Its pathway is porphyrin-containing compound metabolism; protoporphyrin-IX biosynthesis; coproporphyrinogen-III from 5-aminolevulinate: step 2/4. It participates in porphyrin-containing compound metabolism; chlorophyll biosynthesis. In terms of biological role, tetrapolymerization of the monopyrrole PBG into the hydroxymethylbilane pre-uroporphyrinogen in several discrete steps. This is Porphobilinogen deaminase from Chlorobaculum tepidum (strain ATCC 49652 / DSM 12025 / NBRC 103806 / TLS) (Chlorobium tepidum).